The sequence spans 785 residues: Probably inactive leucine-rich repeat receptor-like protein kinase At5g58150 (785 aa).

An N-terminal signal peptide occupies residues 1–21 (MRLSLWGSLLFFSFFVKHLTS). Residues 22–436 (LDPNTDAYHL…KVNKKNTGLK (415 aa)) lie on the Extracellular side of the membrane. LRR repeat units lie at residues 64–88 (SENV…TIGK), 89–112 (MSKL…LWSL), 114–136 (LLES…IGNF), 138–160 (SLHT…ISNL), 161–184 (VNLT…LVHC), 186–208 (SLLS…FGSA), 210–232 (PLLK…VLHE), 236–258 (TVDL…HKHN), 259–283 (WSSL…LSSA), 284–306 (HKLG…EIGK), 307–330 (LSAL…EISR), 331–355 (LSHL…SVKN), 357–377 (EVLD…LLEK), and 379–405 (AMMQ…TIQR). A glycan (N-linked (GlcNAc...) asparagine) is linked at N119. 4 N-linked (GlcNAc...) asparagine glycosylation sites follow: N162, N198, N216, and N258. N-linked (GlcNAc...) asparagine glycans are attached at residues N314, N319, and N343. 3 N-linked (GlcNAc...) asparagine glycosylation sites follow: N385, N390, and N397. Residues 437-457 (IGLGLAISMAFLLIGLLLILV) traverse the membrane as a helical segment. At 458–785 (ALRVRRKSRT…GLLKDISPNY (328 aa)) the chain is on the cytoplasmic side. A phosphothreonine mark is found at T510 and T518. In terms of domain architecture, Protein kinase spans 521-785 (FDRGTMLWEG…GLLKDISPNY (265 aa)). Residues 527–535 (LWEGKSGPT) and K549 contribute to the ATP site. Y594 and Y683 each carry phosphotyrosine.

Belongs to the protein kinase superfamily. Ser/Thr protein kinase family.

It localises to the cell membrane. This is Probably inactive leucine-rich repeat receptor-like protein kinase At5g58150 from Arabidopsis thaliana (Mouse-ear cress).